Reading from the N-terminus, the 429-residue chain is Phosphoribosylamine--glycine ligase (429 aa).

The region spanning 109 to 316 (KDFLARHQIP…LVDLCLAAID (208 aa)) is the ATP-grasp domain. Residue 135–196 (VREQGAPIVV…EEFLDGEEAS (62 aa)) participates in ATP binding. The disordered stretch occupies residues 212–235 (SQDHKRVGDKDTGPNTGGMGAYSP). A compositionally biased stretch (basic and acidic residues) spans 213–223 (QDHKRVGDKDT). Mg(2+) is bound by residues Glu-286 and Asn-288.

Belongs to the GARS family. Requires Mg(2+) as cofactor. The cofactor is Mn(2+).

It carries out the reaction 5-phospho-beta-D-ribosylamine + glycine + ATP = N(1)-(5-phospho-beta-D-ribosyl)glycinamide + ADP + phosphate + H(+). It functions in the pathway purine metabolism; IMP biosynthesis via de novo pathway; N(1)-(5-phospho-D-ribosyl)glycinamide from 5-phospho-alpha-D-ribose 1-diphosphate: step 2/2. The chain is Phosphoribosylamine--glycine ligase from Vibrio parahaemolyticus serotype O3:K6 (strain RIMD 2210633).